The chain runs to 296 residues: Polyamine aminopropyltransferase (296 aa).

One can recognise a PABS domain in the interval 16 to 251 (HLWYFEYYTG…GMWSYTFASK (236 aa)). Gln-46 is a binding site for S-methyl-5'-thioadenosine. Spermidine contacts are provided by His-77 and Asp-101. Residues Glu-121 and 152–153 (NG) contribute to the S-methyl-5'-thioadenosine site. Asp-170 (proton acceptor) is an active-site residue. 170 to 173 (DSTD) provides a ligand contact to spermidine.

The protein belongs to the spermidine/spermine synthase family. As to quaternary structure, homotetramer.

The protein localises to the cytoplasm. The enzyme catalyses S-adenosyl 3-(methylsulfanyl)propylamine + putrescine = S-methyl-5'-thioadenosine + spermidine + H(+). It functions in the pathway amine and polyamine biosynthesis; spermidine biosynthesis; spermidine from putrescine: step 1/1. With respect to regulation, strongly inhibited by S-adenosyl-1,8-diamino-3-thiooctane. Catalyzes the irreversible transfer of a propylamine group from the amino donor S-adenosylmethioninamine (decarboxy-AdoMet) to putrescine (1,4-diaminobutane) to yield spermidine. It has lower affinity and lower activity towards 1,3-diaminopropane, cadaverine (1,5-diaminopentane), agmatine, norspermidine and spermidine (in vitro). In Thermotoga maritima (strain ATCC 43589 / DSM 3109 / JCM 10099 / NBRC 100826 / MSB8), this protein is Polyamine aminopropyltransferase.